A 242-amino-acid polypeptide reads, in one-letter code: UPF0309 protein Oant_1457 (242 aa).

An SIS domain is found at 30–214 (AAELITAAAL…AKLVGKGDAP (185 aa)).

It belongs to the UPF0309 family.

In Brucella anthropi (strain ATCC 49188 / DSM 6882 / CCUG 24695 / JCM 21032 / LMG 3331 / NBRC 15819 / NCTC 12168 / Alc 37) (Ochrobactrum anthropi), this protein is UPF0309 protein Oant_1457.